Consider the following 487-residue polypeptide: GTPase Der (487 aa).

The tract at residues 1–20 is disordered; it reads MAKAVRKSNSEETVPIKAPR. EngA-type G domains are found at residues 28-197 and 225-401; these read PVVS…SSKP and FRLA…SRSR. Residues 34 to 41, 83 to 87, 149 to 152, 231 to 238, 278 to 282, and 343 to 346 each bind GTP; these read GRQNVGKS, DTPGL, NKAD, GKPNSGKS, DTAGI, and NKWD. Residues 402–486 enclose the KH-like domain; sequence RKVSTSELNK…PVRLEFRSDR (85 aa).

It belongs to the TRAFAC class TrmE-Era-EngA-EngB-Septin-like GTPase superfamily. EngA (Der) GTPase family. As to quaternary structure, associates with the 50S ribosomal subunit.

GTPase that plays an essential role in the late steps of ribosome biogenesis. The polypeptide is GTPase Der (Leptospira borgpetersenii serovar Hardjo-bovis (strain L550)).